Consider the following 131-residue polypeptide: Small ribosomal subunit protein uS8 (131 aa).

It belongs to the universal ribosomal protein uS8 family. In terms of assembly, part of the 30S ribosomal subunit. Contacts proteins S5 and S12.

One of the primary rRNA binding proteins, it binds directly to 16S rRNA central domain where it helps coordinate assembly of the platform of the 30S subunit. This Mesomycoplasma hyopneumoniae (strain 7448) (Mycoplasma hyopneumoniae) protein is Small ribosomal subunit protein uS8.